A 467-amino-acid chain; its full sequence is uncharacterized protein (467 aa).

Sel1-like repeat units lie at residues 38 to 73 (PAAAFELAKHLMDADSPYQDREQGMEMLRIAAEQGH), 107 to 138 (PEAQVRLMYLLYASRHFEEALEWAKTSAKNNN), 139 to 172 (PHGQYLLAQYCRYGTPPDFETAHLLYRKSAAQGL), 173 to 208 (PEAHWQLGLQYRFGQGTKVDTAQAVNHLRAAAQQGY), 240 to 275 (PDAHAALADIYLQGKHLERNHKLALHHAEAAAAERH), 276 to 311 (PEGLRILGDICRYGLGIAPDTEKARHYYRQAAEAGS), 343 to 378 (AERLYQKAQALHYGLQCAPEYAAALKLYTEAAELGH), 379 to 414 (SKAQTNLGSMYYFGQGMTADYNEARKWFEKAAAKKD), and 415 to 450 (SMAFYNLACIHYSGHGVEPDKEKACRYLQEAINNGY).

This is an uncharacterized protein from Neisseria meningitidis serogroup B (strain ATCC BAA-335 / MC58).